The sequence spans 226 residues: 7-cyano-7-deazaguanine synthase (226 aa).

9–19 (LSGGLDSATVL) is a binding site for ATP. Zn(2+) is bound by residues Cys189, Cys199, Cys202, and Cys205.

The protein belongs to the QueC family. The cofactor is Zn(2+).

It catalyses the reaction 7-carboxy-7-deazaguanine + NH4(+) + ATP = 7-cyano-7-deazaguanine + ADP + phosphate + H2O + H(+). The protein operates within purine metabolism; 7-cyano-7-deazaguanine biosynthesis. Functionally, catalyzes the ATP-dependent conversion of 7-carboxy-7-deazaguanine (CDG) to 7-cyano-7-deazaguanine (preQ(0)). The chain is 7-cyano-7-deazaguanine synthase from Cupriavidus pinatubonensis (strain JMP 134 / LMG 1197) (Cupriavidus necator (strain JMP 134)).